Here is a 214-residue protein sequence, read N- to C-terminus: Riboflavin kinase (214 aa).

The tract at residues 1–27 (MRPDRPRDPVTGPDEGPESPYPIRMSG) is disordered. Residues threonine 44 and asparagine 46 each coordinate Mg(2+). Catalysis depends on glutamate 101, which acts as the Nucleophile.

This sequence belongs to the flavokinase family. Zn(2+) serves as cofactor. Requires Mg(2+) as cofactor.

It catalyses the reaction riboflavin + ATP = FMN + ADP + H(+). Its pathway is cofactor biosynthesis; FMN biosynthesis; FMN from riboflavin (ATP route): step 1/1. Functionally, catalyzes the phosphorylation of riboflavin (vitamin B2) to form flavin mononucleotide (FMN) coenzyme. This chain is Riboflavin kinase (fmn1), found in Aspergillus niger (strain ATCC MYA-4892 / CBS 513.88 / FGSC A1513).